The sequence spans 416 residues: Peptide chain release factor subunit 1 (416 aa).

Belongs to the eukaryotic release factor 1 family. Heterodimer of two subunits, one of which binds GTP.

The protein resides in the cytoplasm. Directs the termination of nascent peptide synthesis (translation) in response to the termination codons UAA, UAG and UGA. In Haloquadratum walsbyi (strain DSM 16790 / HBSQ001), this protein is Peptide chain release factor subunit 1.